The chain runs to 319 residues: Porphobilinogen deaminase 1 (319 aa).

C244 carries the S-(dipyrrolylmethanemethyl)cysteine modification.

It belongs to the HMBS family. As to quaternary structure, monomer. Dipyrromethane is required as a cofactor.

The enzyme catalyses 4 porphobilinogen + H2O = hydroxymethylbilane + 4 NH4(+). It functions in the pathway porphyrin-containing compound metabolism; protoporphyrin-IX biosynthesis; coproporphyrinogen-III from 5-aminolevulinate: step 2/4. Its function is as follows. Tetrapolymerization of the monopyrrole PBG into the hydroxymethylbilane pre-uroporphyrinogen in several discrete steps. The sequence is that of Porphobilinogen deaminase 1 (hemC1) from Streptomyces coelicolor (strain ATCC BAA-471 / A3(2) / M145).